We begin with the raw amino-acid sequence, 905 residues long: Protein translocase subunit SecA (905 aa).

ATP-binding positions include Gln89, Gly107–Thr111, and Asp502. The disordered stretch occupies residues Glu837 to Arg885. Polar residues predominate over residues Lys852 to Lys865. Zn(2+) is bound by residues Cys889, Cys891, Cys900, and His901.

Belongs to the SecA family. Monomer and homodimer. Part of the essential Sec protein translocation apparatus which comprises SecA, SecYEG and auxiliary proteins SecDF-YajC and YidC. It depends on Zn(2+) as a cofactor.

The protein resides in the cell inner membrane. It is found in the cytoplasm. It carries out the reaction ATP + H2O + cellular proteinSide 1 = ADP + phosphate + cellular proteinSide 2.. In terms of biological role, part of the Sec protein translocase complex. Interacts with the SecYEG preprotein conducting channel. Has a central role in coupling the hydrolysis of ATP to the transfer of proteins into and across the cell membrane, serving both as a receptor for the preprotein-SecB complex and as an ATP-driven molecular motor driving the stepwise translocation of polypeptide chains across the membrane. In Bartonella henselae (strain ATCC 49882 / DSM 28221 / CCUG 30454 / Houston 1) (Rochalimaea henselae), this protein is Protein translocase subunit SecA.